The primary structure comprises 150 residues: Large ribosomal subunit protein uL13 (150 aa).

The protein belongs to the universal ribosomal protein uL13 family. In terms of assembly, part of the 50S ribosomal subunit.

This protein is one of the early assembly proteins of the 50S ribosomal subunit, although it is not seen to bind rRNA by itself. It is important during the early stages of 50S assembly. The sequence is that of Large ribosomal subunit protein uL13 from Persephonella marina (strain DSM 14350 / EX-H1).